A 467-amino-acid chain; its full sequence is GTPase Der (467 aa).

2 consecutive EngA-type G domains span residues 3 to 167 (PTLV…PYEE) and 179 to 352 (PVIA…AAAR). GTP contacts are provided by residues 9–16 (GRPNVGKS), 56–60 (DTGGF), 119–122 (NKTE), 185–192 (GRPNVGKS), 232–236 (DTAGL), and 297–300 (NKWD). A KH-like domain is found at 353–437 (AHIPTPKLTR…PLRVEFRTGH (85 aa)). Residues 434-467 (RTGHNPYAGKKTPLTEEEARRAHSRRRRNRKKYG) are disordered. The segment covering 455–467 (AHSRRRRNRKKYG) has biased composition (basic residues).

This sequence belongs to the TRAFAC class TrmE-Era-EngA-EngB-Septin-like GTPase superfamily. EngA (Der) GTPase family. As to quaternary structure, associates with the 50S ribosomal subunit.

Its function is as follows. GTPase that plays an essential role in the late steps of ribosome biogenesis. The sequence is that of GTPase Der from Nitrosomonas europaea (strain ATCC 19718 / CIP 103999 / KCTC 2705 / NBRC 14298).